Here is a 277-residue protein sequence, read N- to C-terminus: Shikimate dehydrogenase (NADP(+)) (277 aa).

Residues Ser-15–Ser-17 and Thr-62 each bind shikimate. Lys-66 serves as the catalytic Proton acceptor. Glu-78 lines the NADP(+) pocket. Shikimate is bound by residues Asn-87 and Asp-103. Residues Gly-127–Ala-131, Asn-151–Lys-156, and Gly-238 each bind NADP(+).

It belongs to the shikimate dehydrogenase family. Homodimer.

The enzyme catalyses shikimate + NADP(+) = 3-dehydroshikimate + NADPH + H(+). It participates in metabolic intermediate biosynthesis; chorismate biosynthesis; chorismate from D-erythrose 4-phosphate and phosphoenolpyruvate: step 4/7. Involved in the biosynthesis of the chorismate, which leads to the biosynthesis of aromatic amino acids. Catalyzes the reversible NADPH linked reduction of 3-dehydroshikimate (DHSA) to yield shikimate (SA). In Shewanella frigidimarina (strain NCIMB 400), this protein is Shikimate dehydrogenase (NADP(+)).